We begin with the raw amino-acid sequence, 279 residues long: Nitrate import permease protein NrtB (279 aa).

The 185-residue stretch at 86 to 270 folds into the ABC transmembrane type-1 domain; it reads IAASLQRVAV…LLNALVGFIA (185 aa). Transmembrane regions (helical) follow at residues 98–118, 124–144, 151–171, 196–216, 217–237, and 249–269; these read LMAAIAGIALGILIGVSVLMF, IFQVLRTVPPLAWLPISLAAF, AIFVIFITAIWPIIINTAVGV, VLLPATVPYIFTGLKIAIGLS, WLAIVAAEMLTGGVGIGFFIW, and ILAIIYVGLVGLLLNALVGFI.

The protein belongs to the binding-protein-dependent transport system permease family. CysTW subfamily. As to quaternary structure, the complex is composed of two ATP-binding proteins (NrtC and NrtD), two transmembrane proteins (NrtB) and a solute-binding protein (NrtA).

It is found in the cell inner membrane. Part of the ABC transporter complex NrtABCD involved in nitrate uptake. The complex is probably also involved in nitrite transport. Probably responsible for the translocation of the substrate across the membrane. The polypeptide is Nitrate import permease protein NrtB (Leptolyngbya laminosa (Phormidium laminosum)).